A 292-amino-acid polypeptide reads, in one-letter code: ATP synthase subunit a (292 aa).

6 helical membrane-spanning segments follow: residues Ile37 to Cys57, Phe96 to Met116, Val144 to Cys164, Pro192 to Ala212, Leu230 to Leu250, and Ala263 to Ile283.

This sequence belongs to the ATPase A chain family. As to quaternary structure, F-type ATPases have 2 components, CF(1) - the catalytic core - and CF(0) - the membrane proton channel. CF(1) has five subunits: alpha(3), beta(3), gamma(1), delta(1), epsilon(1). CF(0) has three main subunits: a(1), b(2) and c(9-12). The alpha and beta chains form an alternating ring which encloses part of the gamma chain. CF(1) is attached to CF(0) by a central stalk formed by the gamma and epsilon chains, while a peripheral stalk is formed by the delta and b chains.

It is found in the cell inner membrane. Functionally, key component of the proton channel; it plays a direct role in the translocation of protons across the membrane. This Paracidovorax citrulli (strain AAC00-1) (Acidovorax citrulli) protein is ATP synthase subunit a.